A 1822-amino-acid polypeptide reads, in one-letter code: Sperm flagellar protein 2 (1822 aa).

Residues 1–105 (MSEILCQWLN…LLYQLYIALQ (105 aa)) form the Calponin-homology (CH) domain. 4 coiled-coil regions span residues 227 to 260 (KALE…KDLQ), 321 to 396 (AHEA…KQAK), 732 to 758 (NQAQ…KAQK), and 871 to 909 (CEKV…LAEL). Disordered stretches follow at residues 896–1004 (KEAE…VPQP), 1278–1327 (EEEK…EATP), 1664–1718 (SIPS…NNEK), and 1803–1822 (EHVQ…EEKK). Residues 911–920 (LPTPPPAPPP) are compositionally biased toward pro residues. 2 stretches are compositionally biased toward basic and acidic residues: residues 921–930 (EPEKEKEIHQ) and 949–968 (PHGK…ETAL). Low complexity predominate over residues 975-987 (KGKSSGGKVPVKK). 2 stretches are compositionally biased toward basic and acidic residues: residues 1278-1292 (EEEK…KEKS) and 1303-1314 (KEPPKKKQEDKK). The interval 1324–1676 (EATPVIVTTE…SAEKTSSTDA (353 aa)) is interaction with IFT20. Residues 1686–1712 (EENAAREERKLKDDTEKREQKDEEIPE) adopt a coiled-coil conformation. Residues 1688-1708 (NAAREERKLKDDTEKREQKDE) are compositionally biased toward basic and acidic residues.

Interacts (via C-terminus) with IFT20. Interacts with DYNC1I2.

Its subcellular location is the cell projection. It localises to the cilium. It is found in the flagellum. The protein localises to the cytoplasm. The protein resides in the golgi apparatus. Functionally, required for correct axoneme development in spermatozoa. Important for normal development of the manchette and sperm head morphology. Essential for male fertility. Plays a role in localization of the intraflagellar transport protein IFT20 to the manchette, suggesting function as an adapter for dynein-mediated protein transport during spermatogenesis. Also plays a role in bone growth where it seems to be required for normal osteoblast differentiation. This chain is Sperm flagellar protein 2 (SPEF2), found in Homo sapiens (Human).